A 59-amino-acid polypeptide reads, in one-letter code: Venom protein 27.7 (59 aa).

An N-terminal signal peptide occupies residues 1 to 29 (MTFITLTIGLSLRTIFLIFIFLPPPHLLA).

Belongs to the non-disulfide-bridged peptide (NDBP) superfamily. Expressed by the venom gland.

It localises to the secreted. The sequence is that of Venom protein 27.7 from Lychas mucronatus (Chinese swimming scorpion).